Consider the following 409-residue polypeptide: uncharacterized protein (409 aa).

The region spanning 3 to 162 (TDVRVLRQDD…DDVRLRYAVP (160 aa)) is the N-acetyltransferase domain. Acetyl-CoA contacts are provided by residues 82-84 (VSV), 90-95 (RRGVLT), and 118-119 (SE). The Proton donor role is filled by Y123. F409 (proton acceptor; via carboxylate) is an active-site residue.

It belongs to the acetyltransferase Eis family. As to quaternary structure, homohexamer; trimer of dimers.

This is an uncharacterized protein from Streptomyces avermitilis (strain ATCC 31267 / DSM 46492 / JCM 5070 / NBRC 14893 / NCIMB 12804 / NRRL 8165 / MA-4680).